A 243-amino-acid chain; its full sequence is Ribosomal RNA small subunit methyltransferase G (243 aa).

S-adenosyl-L-methionine-binding positions include Gly-79, Phe-84, 130–131, and Arg-150; that span reads AE. The interval 222 to 243 is disordered; it reads KPTPNKYPRKPGIPNKQPLGGA.

It belongs to the methyltransferase superfamily. RNA methyltransferase RsmG family.

It localises to the cytoplasm. Specifically methylates the N7 position of a guanine in 16S rRNA. This is Ribosomal RNA small subunit methyltransferase G from Lacticaseibacillus paracasei (strain ATCC 334 / BCRC 17002 / CCUG 31169 / CIP 107868 / KCTC 3260 / NRRL B-441) (Lactobacillus paracasei).